Reading from the N-terminus, the 321-residue chain is Sporulation protein cse15 (321 aa).

Coiled-coil stretches lie at residues 37 to 70 (FHQKNNKLLKENTDMKEKLQQLSAELTHMSTKEK) and 108 to 205 (IEEK…KEKL). 2 stretches are compositionally biased toward basic and acidic residues: residues 234-243 (GTKQKEKTEE) and 282-293 (AKSHTIEELKNR). Disordered regions lie at residues 234 to 253 (GTKQKEKTEEEAPAAYAQPN) and 274 to 293 (AHAQSSDQAKSHTIEELKNR).

In Bacillus subtilis (strain 168), this protein is Sporulation protein cse15 (cse15).